Consider the following 328-residue polypeptide: Phenylalanine--tRNA ligase alpha subunit (328 aa).

Mg(2+) is bound at residue glutamate 253.

This sequence belongs to the class-II aminoacyl-tRNA synthetase family. Phe-tRNA synthetase alpha subunit type 1 subfamily. In terms of assembly, tetramer of two alpha and two beta subunits. Requires Mg(2+) as cofactor.

The protein resides in the cytoplasm. It catalyses the reaction tRNA(Phe) + L-phenylalanine + ATP = L-phenylalanyl-tRNA(Phe) + AMP + diphosphate + H(+). The sequence is that of Phenylalanine--tRNA ligase alpha subunit from Chromobacterium violaceum (strain ATCC 12472 / DSM 30191 / JCM 1249 / CCUG 213 / NBRC 12614 / NCIMB 9131 / NCTC 9757 / MK).